Reading from the N-terminus, the 205-residue chain is Guanylate kinase (205 aa).

Positions 5-184 constitute a Guanylate kinase-like domain; sequence GLLIVLSGPS…AVQKIKGIVE (180 aa). ATP is bound at residue 12-19; sequence GPSGVGKG.

Belongs to the guanylate kinase family.

The protein resides in the cytoplasm. It catalyses the reaction GMP + ATP = GDP + ADP. In terms of biological role, essential for recycling GMP and indirectly, cGMP. The protein is Guanylate kinase of Listeria innocua serovar 6a (strain ATCC BAA-680 / CLIP 11262).